The following is a 217-amino-acid chain: External core antigen (217 aa).

Positions 1–20 (MYLFHLCLVFACVPCPTVQA) are cleaved as a signal peptide. Positions 26-28 (GWL) are HBEAG. The disordered stretch occupies residues 166–217 (APILSTLPEHTVIRRRGGSRAARSPRRRTPSPRRRRSQSPRRRRSQSPASNC). A compositionally biased stretch (basic residues) spans 178–210 (IRRRGGSRAARSPRRRTPSPRRRRSQSPRRRRS). One copy of the 1; half-length repeat lies at 189 to 195 (SPRRRTP). The tract at residues 189–211 (SPRRRTPSPRRRRSQSPRRRRSQ) is 3 X 8 AA repeats of S-P-R-R-R-R-S-Q. Residues 189–217 (SPRRRTPSPRRRRSQSPRRRRSQSPASNC) constitute a propeptide that is removed on maturation. 2 repeat units span residues 196-203 (SPRRRRSQ) and 204-211 (SPRRRRSQ).

Belongs to the orthohepadnavirus precore antigen family. As to quaternary structure, homodimerizes. Phosphorylated. In terms of processing, cleaved by host furin.

The protein localises to the secreted. It is found in the host nucleus. In terms of biological role, may regulate immune response to the intracellular capsid in acting as a T-cell tolerogen, by having an immunoregulatory effect which prevents destruction of infected cells by cytotoxic T-cells. This immune regulation may predispose to chronicity during perinatal infections and prevent severe liver injury during adult infections. This Otospermophilus beecheyi (California ground squirrel) protein is External core antigen.